Here is a 128-residue protein sequence, read N- to C-terminus: Large ribosomal subunit protein bL17 (128 aa).

Belongs to the bacterial ribosomal protein bL17 family. In terms of assembly, part of the 50S ribosomal subunit. Contacts protein L32.

This is Large ribosomal subunit protein bL17 from Pseudomonas syringae pv. tomato (strain ATCC BAA-871 / DC3000).